The primary structure comprises 911 residues: Nitrate reductase [NADH] (911 aa).

Residues Met-1–Tyr-10 show a composition bias toward polar residues. The disordered stretch occupies residues Met-1–Lys-71. A compositionally biased stretch (acidic residues) spans Ser-61–Lys-71. A Mo-molybdopterin-binding site is contributed by Cys-188. A Cytochrome b5 heme-binding domain is found at Ser-536–Ile-611. Heme is bound by residues His-571 and His-594. The FAD-binding FR-type domain occupies Arg-654–Gln-766. Residues Arg-706–Thr-709, Val-723–Tyr-727, Phe-728, Phe-735, Gln-740–Ser-742, and Thr-793 contribute to the FAD site.

Belongs to the nitrate reductase family. As to quaternary structure, homodimer. It depends on FAD as a cofactor. Heme is required as a cofactor. Requires Mo-molybdopterin as cofactor.

It carries out the reaction nitrite + NAD(+) + H2O = nitrate + NADH + H(+). Its function is as follows. Nitrate reductase is a key enzyme involved in the first step of nitrate assimilation in plants, fungi and bacteria. The protein is Nitrate reductase [NADH] (NIA) of Solanum lycopersicum (Tomato).